A 278-amino-acid chain; its full sequence is Undecaprenyl-diphosphatase (278 aa).

A run of 8 helical transmembrane segments spans residues 2 to 22 (ALVE…TEWL), 44 to 64 (AFME…VVLL), 85 to 105 (IEMW…GLLW), 113 to 133 (FYNY…FIVI), 150 to 170 (ITYT…IFPG), 189 to 209 (TVAA…ASAL), 223 to 243 (LMIL…SIKF), and 253 to 273 (FKIF…YFSA).

The protein belongs to the UppP family.

The protein localises to the cell membrane. The enzyme catalyses di-trans,octa-cis-undecaprenyl diphosphate + H2O = di-trans,octa-cis-undecaprenyl phosphate + phosphate + H(+). Functionally, catalyzes the dephosphorylation of undecaprenyl diphosphate (UPP). Confers resistance to bacitracin. This chain is Undecaprenyl-diphosphatase, found in Desulfitobacterium hafniense (strain DSM 10664 / DCB-2).